The following is a 320-amino-acid chain: Glycerol-3-phosphate dehydrogenase [NAD(P)+] (320 aa).

F11, R30, and K102 together coordinate NADPH. Residues K102, G130, and S132 each coordinate sn-glycerol 3-phosphate. An NADPH-binding site is contributed by A134. Residues K185, D238, S248, R249, and N250 each contribute to the sn-glycerol 3-phosphate site. The active-site Proton acceptor is the K185. R249 is a binding site for NADPH. E270 contacts NADPH.

The protein belongs to the NAD-dependent glycerol-3-phosphate dehydrogenase family.

It localises to the cytoplasm. The catalysed reaction is sn-glycerol 3-phosphate + NAD(+) = dihydroxyacetone phosphate + NADH + H(+). The enzyme catalyses sn-glycerol 3-phosphate + NADP(+) = dihydroxyacetone phosphate + NADPH + H(+). Its pathway is membrane lipid metabolism; glycerophospholipid metabolism. Its function is as follows. Catalyzes the reduction of the glycolytic intermediate dihydroxyacetone phosphate (DHAP) to sn-glycerol 3-phosphate (G3P), the key precursor for phospholipid synthesis. This is Glycerol-3-phosphate dehydrogenase [NAD(P)+] from Ruegeria sp. (strain TM1040) (Silicibacter sp.).